The sequence spans 100 residues: uncharacterized protein (100 aa).

2 consecutive transmembrane segments (helical) span residues 50–70 and 75–95; these read LLIF…FSLF and DVFL…SPEV.

Its subcellular location is the membrane. This is an uncharacterized protein from Saccharomyces cerevisiae (strain ATCC 204508 / S288c) (Baker's yeast).